The following is a 131-amino-acid chain: POU domain, class 3, transcription factor 3 (131 aa).

A POU-specific domain is found at 1 to 60; it reads FTQRRMKLGFTQADVGLALGTLYGNVFSQTTICRFEALQLSFKNMCKLKPLLNKWLEEAD. The segment at residues 78–131 is a DNA-binding region (homeobox); the sequence is KRKKRTSIEVSVKGALESHFLKCPKPSAQEITNLADSLQLEKEVVRVWFCNNLQ.

The protein belongs to the POU transcription factor family. Class-3 subfamily. As to quaternary structure, homodimer. Brain.

Its subcellular location is the nucleus. In terms of biological role, transcription factor that acts synergistically with SOX11 and SOX4. Plays a role in neuronal development. Is implicated in an enhancer activity at the embryonic met-mesencephalic junction; the enhancer element contains the octamer motif (5'-ATTTGCAT-3'). This is POU domain, class 3, transcription factor 3 (POU3F3) from Sus scrofa (Pig).